Here is a 377-residue protein sequence, read N- to C-terminus: uncharacterized protein (377 aa).

A run of 2 helical transmembrane segments spans residues 71 to 91 and 140 to 160; these read IIAT…LVGS and AEAA…PTLF.

It is found in the membrane. This is an uncharacterized protein from Coxiella burnetii (strain RSA 493 / Nine Mile phase I).